Consider the following 1400-residue polypeptide: DNA-directed RNA polymerase subunit beta' (1400 aa).

The Zn(2+) site is built by Cys-71, Cys-73, Cys-86, and Cys-89. Mg(2+)-binding residues include Asp-462, Asp-464, and Asp-466. 4 residues coordinate Zn(2+): Cys-811, Cys-885, Cys-892, and Cys-895.

Belongs to the RNA polymerase beta' chain family. As to quaternary structure, the RNAP catalytic core consists of 2 alpha, 1 beta, 1 beta' and 1 omega subunit. When a sigma factor is associated with the core the holoenzyme is formed, which can initiate transcription. Mg(2+) serves as cofactor. The cofactor is Zn(2+).

It carries out the reaction RNA(n) + a ribonucleoside 5'-triphosphate = RNA(n+1) + diphosphate. In terms of biological role, DNA-dependent RNA polymerase catalyzes the transcription of DNA into RNA using the four ribonucleoside triphosphates as substrates. The chain is DNA-directed RNA polymerase subunit beta' from Brucella suis (strain ATCC 23445 / NCTC 10510).